The primary structure comprises 736 residues: NADPH--cytochrome P450 reductase (736 aa).

Position 1 (M1) is a topological domain, lumenal. The helical transmembrane segment at 2–24 (AVSSSSDVIVLSVGIILAALYLF) threads the bilayer. The Cytoplasmic portion of the chain corresponds to 25–736 (REQIFSAAKP…RNRLLLDVWS (712 aa)). The Flavodoxin-like domain occupies 66 to 216 (IVIFYGSQTG…DYLEWKDGMW (151 aa)). FMN-binding positions include 72–77 (SQTGTA), 123–126 (ATYG), 165–174 (LGNKTYEHYN), and D200. Residues 269–546 (KNPYPAPIIA…EGPRGAYKQG (278 aa)) form the FAD-binding FR-type domain. R289 is an NADP(+) binding site. Residues 456–459 (RYYS), 474–476 (TVV), Y480, and 495–498 (GVGS) contribute to the FAD site. Residues T577, 648 to 649 (SR), and 659 to 663 (KIYVQ) each bind NADP(+). W735 provides a ligand contact to FAD.

This sequence belongs to the NADPH--cytochrome P450 reductase family. It in the N-terminal section; belongs to the flavodoxin family. In the C-terminal section; belongs to the flavoprotein pyridine nucleotide cytochrome reductase family. The cofactor is FAD. FMN serves as cofactor.

Its subcellular location is the endoplasmic reticulum membrane. It is found in the mitochondrion outer membrane. The protein resides in the cell membrane. It catalyses the reaction 2 oxidized [cytochrome P450] + NADPH = 2 reduced [cytochrome P450] + NADP(+) + H(+). In terms of biological role, this enzyme is required for electron transfer from NADP to cytochrome P450 in microsomes. It can also provide electron transfer to heme oxygenase and cytochrome B5. Involved in ergosterol biosynthesis. This is NADPH--cytochrome P450 reductase (CPR) from Phanerodontia chrysosporium (White-rot fungus).